Here is a 279-residue protein sequence, read N- to C-terminus: Acetyl-coenzyme A carboxylase carboxyl transferase subunit beta (279 aa).

The CoA carboxyltransferase N-terminal domain maps to 23–279; it reads MWWKCDECGA…IVRLMTMLAP (257 aa). The Zn(2+) site is built by C27, C30, C46, and C49. Residues 27–49 form a C4-type zinc finger; that stretch reads CDECGAMLHKKQLEDNFYTCSEC.

Belongs to the AccD/PCCB family. Acetyl-CoA carboxylase is a heterohexamer composed of biotin carboxyl carrier protein (AccB), biotin carboxylase (AccC) and two subunits each of ACCase subunit alpha (AccA) and ACCase subunit beta (AccD). Zn(2+) is required as a cofactor.

The protein resides in the cytoplasm. It catalyses the reaction N(6)-carboxybiotinyl-L-lysyl-[protein] + acetyl-CoA = N(6)-biotinyl-L-lysyl-[protein] + malonyl-CoA. It functions in the pathway lipid metabolism; malonyl-CoA biosynthesis; malonyl-CoA from acetyl-CoA: step 1/1. Functionally, component of the acetyl coenzyme A carboxylase (ACC) complex. Biotin carboxylase (BC) catalyzes the carboxylation of biotin on its carrier protein (BCCP) and then the CO(2) group is transferred by the transcarboxylase to acetyl-CoA to form malonyl-CoA. This chain is Acetyl-coenzyme A carboxylase carboxyl transferase subunit beta, found in Chlorobium phaeobacteroides (strain DSM 266 / SMG 266 / 2430).